Reading from the N-terminus, the 198-residue chain is Recombination protein RecR (198 aa).

Residues 57–72 (CAMCNTFTESAVCETC) form a C4-type zinc finger. A Toprim domain is found at 80-175 (ALLCVVETPG…KVSRLARGVP (96 aa)).

The protein belongs to the RecR family.

Its function is as follows. May play a role in DNA repair. It seems to be involved in an RecBC-independent recombinational process of DNA repair. It may act with RecF and RecO. This Herminiimonas arsenicoxydans protein is Recombination protein RecR.